A 1310-amino-acid chain; its full sequence is PAN2-PAN3 deadenylation complex catalytic subunit pan2 (1310 aa).

WD repeat units lie at residues 22-61 (YHAGPASTIAFDNQDELLWIGTQKGFAGSFIGRELKRFTA), 67-105 (ETDGPLRQFLFVDKGVIFLGSRSVYMAARSGVPIWSIRH), 106-144 (ESMQDLRAMSFTSKGTSEILVAGWQNKMLVIDVNKGEVV), and 145-184 (KELPTQDQYSFLKMSRYICAATNKGTVNILDPITFTIKKQ). The linker stretch occupies residues 318–463 (QFTEIGIPPR…NNDHWSLRPE (146 aa)). Residues 463 to 850 (EAPPEYRICE…MPVVVMFQVK (388 aa)) form the USP domain. 8 residues coordinate Zn(2+): His-525, Cys-530, Cys-535, Cys-538, Cys-645, Cys-648, Cys-700, and Cys-703. An Exonuclease domain is found at 897–1070 (IAIDTEFIRL…EDAQTALKLY (174 aa)). Positions 900, 902, 1009, and 1062 each coordinate a divalent metal cation. The disordered stretch occupies residues 1121-1169 (TPPVPAPGTTEGSFEISNSSTATTGGSALSATGGMGSASASSSMPSTPV). A compositionally biased stretch (low complexity) spans 1139–1168 (SSTATTGGSALSATGGMGSASASSSMPSTP).

The protein belongs to the peptidase C19 family. PAN2 subfamily. Forms a heterotrimer with an asymmetric homodimer of the regulatory subunit par-2/pan3 to form the poly(A)-nuclease (PAN) deadenylation complex. It depends on a divalent metal cation as a cofactor.

It localises to the cytoplasm. It carries out the reaction Exonucleolytic cleavage of poly(A) to 5'-AMP.. Its activity is regulated as follows. Positively regulated by the regulatory subunit par-2/pan3. Its function is as follows. Catalytic subunit of the poly(A)-nuclease (PAN) deadenylation complex, one of two cytoplasmic mRNA deadenylases involved in mRNA turnover. PAN specifically shortens poly(A) tails of RNA and the activity is stimulated by poly(A)-binding protein pabp-1. PAN deadenylation is followed by rapid degradation of the shortened mRNA tails by the CCR4-NOT complex. Deadenylated mRNAs are then degraded by two alternative mechanisms, namely exosome-mediated 3'-5' exonucleolytic degradation, or deadenylation-dependent mRNA decaping and subsequent 5'-3' exonucleolytic degradation by rgb-30/xrn1. May also be involved in post-transcriptional maturation of mRNA poly(A) tails. This chain is PAN2-PAN3 deadenylation complex catalytic subunit pan2 (par-1), found in Neurospora crassa (strain ATCC 24698 / 74-OR23-1A / CBS 708.71 / DSM 1257 / FGSC 987).